A 354-amino-acid chain; its full sequence is Histidinol-phosphate aminotransferase (354 aa).

Lys-215 is subject to N6-(pyridoxal phosphate)lysine.

Belongs to the class-II pyridoxal-phosphate-dependent aminotransferase family. Histidinol-phosphate aminotransferase subfamily. Homodimer. Requires pyridoxal 5'-phosphate as cofactor.

The catalysed reaction is L-histidinol phosphate + 2-oxoglutarate = 3-(imidazol-4-yl)-2-oxopropyl phosphate + L-glutamate. It functions in the pathway amino-acid biosynthesis; L-histidine biosynthesis; L-histidine from 5-phospho-alpha-D-ribose 1-diphosphate: step 7/9. This is Histidinol-phosphate aminotransferase from Vesicomyosocius okutanii subsp. Calyptogena okutanii (strain HA).